The sequence spans 644 residues: MSSSRKQARLDAKTNIESLSVQPYPNSNKVYIEGSRPDIRVPMREISLADSLVGGTKESPIFEPNEPIQVYDTSGVYTDPSYDIDVYRGLPKLRQEWIEERNDTELLDGVSSVYSQERLADETLDELRYGNLPTIRRAKQGQCVTQLHYARQGIITPEMEYIAIRENMGRQKFADEQLNHQHPGHSFGANLPKEITPEFVRKEVAEGRAIIPSNINHPEAEPMIIGRNFLIKVNANIGNSSVSSSIEEEVEKLVWSTRWGGDTVMDLSTGRNIHETREWILRNSPVPIGTVPMYQALEKVNGVAENLNWEVMRDTLIEQAEQGVDYFTIHAGLLLRYVPMTAKRVTGIVSRGGSIIAKWCLAHHQESFLYTHFREICEICAKYDVALSLGDGLRPGSVADANDEAQFAELRTLGELTKVAWEYDVQVIIEGPGHVPMHMIKENMDEQLKHCHEAPFYTLGPLTTDIAPGYDHITSGIGAAMIGWYGCAMLCYVTPKEHLGLPNKDDVKTGLITYKLAAHAGDLAKGHPGAQIRDNALSKARFEFRWEDQFNLSLDPITAREYHDETLPQESGKVAHFCSMCGPKFCSMKISQEVREYAKDSEQVALDQAIEIKMIDDPLEGMRQKSEEFKASGSELYHPAVEAE.

Residues Asn-236, Met-265, Tyr-294, His-330, 350–352 (SRG), 391–394 (DGLR), and Glu-430 each bind substrate. Residue His-434 coordinates Zn(2+). Residue Tyr-457 participates in substrate binding. His-498 provides a ligand contact to Zn(2+). Positions 578, 581, and 586 each coordinate [4Fe-4S] cluster. The interval 623 to 644 (RQKSEEFKASGSELYHPAVEAE) is disordered.

The protein belongs to the ThiC family. Homodimer. [4Fe-4S] cluster serves as cofactor.

It carries out the reaction 5-amino-1-(5-phospho-beta-D-ribosyl)imidazole + S-adenosyl-L-methionine = 4-amino-2-methyl-5-(phosphooxymethyl)pyrimidine + CO + 5'-deoxyadenosine + formate + L-methionine + 3 H(+). The protein operates within cofactor biosynthesis; thiamine diphosphate biosynthesis. Functionally, catalyzes the synthesis of the hydroxymethylpyrimidine phosphate (HMP-P) moiety of thiamine from aminoimidazole ribotide (AIR) in a radical S-adenosyl-L-methionine (SAM)-dependent reaction. This Aliivibrio fischeri (strain MJ11) (Vibrio fischeri) protein is Phosphomethylpyrimidine synthase.